Here is a 298-residue protein sequence, read N- to C-terminus: ATP synthase F(1) complex subunit gamma, mitochondrial (298 aa).

Residues 1 to 25 (MFSRAGVAGLSAWTLQPQWIQVRNM) constitute a mitochondrion transit peptide. Lys39 carries the N6-acetyllysine modification. Lys49 is modified (N6-succinyllysine). Lys55 is modified (N6-acetyllysine). Lys115 is modified (N6-acetyllysine; alternate). Lys115 carries the post-translational modification N6-succinyllysine; alternate. The residue at position 146 (Ser146) is a Phosphoserine. Residue Lys154 is modified to N6-acetyllysine; alternate. Position 154 is an N6-succinyllysine; alternate (Lys154). Position 197 is an N6-acetyllysine (Lys197). Position 270 is an N6-succinyllysine (Lys270).

The protein belongs to the ATPase gamma chain family. As to quaternary structure, component of the ATP synthase complex composed at least of ATP5F1A/subunit alpha, ATP5F1B/subunit beta, ATP5MC1/subunit c (homooctomer), MT-ATP6/subunit a, MT-ATP8/subunit 8, ATP5ME/subunit e, ATP5MF/subunit f, ATP5MG/subunit g, ATP5MK/subunit k, ATP5MJ/subunit j, ATP5F1C/subunit gamma, ATP5F1D/subunit delta, ATP5F1E/subunit epsilon, ATP5PF/subunit F6, ATP5PB/subunit b, ATP5PD/subunit d, ATP5PO/subunit OSCP. ATP synthase complex consists of a soluble F(1) head domain (subunits alpha(3) and beta(3)) - the catalytic core - and a membrane F(0) domain - the membrane proton channel (subunits c, a, 8, e, f, g, k and j). These two domains are linked by a central stalk (subunits gamma, delta, and epsilon) rotating inside the F1 region and a stationary peripheral stalk (subunits F6, b, d, and OSCP). Interacts with FLVCR2; this interaction occurs in the absence of heme and is disrupted upon heme binding.

The protein localises to the mitochondrion inner membrane. Its function is as follows. Subunit gamma, of the mitochondrial membrane ATP synthase complex (F(1)F(0) ATP synthase or Complex V) that produces ATP from ADP in the presence of a proton gradient across the membrane which is generated by electron transport complexes of the respiratory chain. ATP synthase complex consist of a soluble F(1) head domain - the catalytic core - and a membrane F(1) domain - the membrane proton channel. These two domains are linked by a central stalk rotating inside the F(1) region and a stationary peripheral stalk. During catalysis, ATP synthesis in the catalytic domain of F(1) is coupled via a rotary mechanism of the central stalk subunits to proton translocation. In vivo, can only synthesize ATP although its ATP hydrolase activity can be activated artificially in vitro. With the central stalk subunit delta, is essential for the biogenesis of F(1) catalytic part of the ATP synthase complex namely in the formation of F1 assembly intermediate. This is ATP synthase F(1) complex subunit gamma, mitochondrial from Macaca fascicularis (Crab-eating macaque).